Reading from the N-terminus, the 604-residue chain is Protein TAX4 (604 aa).

Disordered stretches follow at residues 38-77, 132-249, 267-299, 338-380, and 394-428; these read HPNG…PRSI, SFSN…RQQE, GTLP…QQEN, DETF…KGLK, and PFPH…NEDK. Over residues 176 to 185 the composition is skewed to polar residues; the sequence is YDNNVRSRSI. 2 stretches are compositionally biased toward low complexity: residues 186–203 and 224–240; these read SPQV…SISS and SMSS…KASL. Composition is skewed to basic residues over residues 276-290, 366-379, and 396-421; these read SQRK…HRLL, KKKK…KKGL, and PHHH…HTSS. The EH domain occupies 469–559; that stretch reads ANEDDESHLQ…RVWNSVDGYV (91 aa).

The protein belongs to the IRS4 family. Interacts with INP51.

With IRS4, acts as a positive regulator of INP51 activity and phosphatidylinositol 4,5-bisphosphate turnover. Negatively regulates signaling through the cell integrity pathway, including the MAP kinase SLT2. The sequence is that of Protein TAX4 (TAX4) from Saccharomyces cerevisiae (strain ATCC 204508 / S288c) (Baker's yeast).